We begin with the raw amino-acid sequence, 478 residues long: Protein nucleotidyltransferase YdiU (478 aa).

8 residues coordinate ATP: Gly83, Gly85, Arg86, Lys106, Asp118, Gly119, Arg169, and Arg176. Asp245 (proton acceptor) is an active-site residue. Asn246 and Asp255 together coordinate Mg(2+). Asp255 is a binding site for ATP.

It belongs to the SELO family. Mg(2+) is required as a cofactor. It depends on Mn(2+) as a cofactor.

It carries out the reaction L-seryl-[protein] + ATP = 3-O-(5'-adenylyl)-L-seryl-[protein] + diphosphate. The catalysed reaction is L-threonyl-[protein] + ATP = 3-O-(5'-adenylyl)-L-threonyl-[protein] + diphosphate. It catalyses the reaction L-tyrosyl-[protein] + ATP = O-(5'-adenylyl)-L-tyrosyl-[protein] + diphosphate. The enzyme catalyses L-histidyl-[protein] + UTP = N(tele)-(5'-uridylyl)-L-histidyl-[protein] + diphosphate. It carries out the reaction L-seryl-[protein] + UTP = O-(5'-uridylyl)-L-seryl-[protein] + diphosphate. The catalysed reaction is L-tyrosyl-[protein] + UTP = O-(5'-uridylyl)-L-tyrosyl-[protein] + diphosphate. Its function is as follows. Nucleotidyltransferase involved in the post-translational modification of proteins. It can catalyze the addition of adenosine monophosphate (AMP) or uridine monophosphate (UMP) to a protein, resulting in modifications known as AMPylation and UMPylation. The polypeptide is Protein nucleotidyltransferase YdiU (Exiguobacterium sp. (strain ATCC BAA-1283 / AT1b)).